The primary structure comprises 330 residues: ADP-L-glycero-D-manno-heptose-6-epimerase (330 aa).

NADP(+)-binding positions include 11 to 12 (FI), 32 to 33 (DN), Lys39, Lys54, 75 to 79 (EGACS), and Asn92. Tyr139 acts as the Proton acceptor in catalysis. Lys143 is an NADP(+) binding site. A substrate-binding site is contributed by Asn168. Residues Val169 and Lys177 each contribute to the NADP(+) site. The Proton acceptor role is filled by Lys177. Residues Arg179, His186, 200-203 (FGEY), Arg213, and Tyr292 each bind substrate.

The protein belongs to the NAD(P)-dependent epimerase/dehydratase family. HldD subfamily. In terms of assembly, homopentamer. Requires NADP(+) as cofactor.

It carries out the reaction ADP-D-glycero-beta-D-manno-heptose = ADP-L-glycero-beta-D-manno-heptose. It functions in the pathway nucleotide-sugar biosynthesis; ADP-L-glycero-beta-D-manno-heptose biosynthesis; ADP-L-glycero-beta-D-manno-heptose from D-glycero-beta-D-manno-heptose 7-phosphate: step 4/4. Catalyzes the interconversion between ADP-D-glycero-beta-D-manno-heptose and ADP-L-glycero-beta-D-manno-heptose via an epimerization at carbon 6 of the heptose. The sequence is that of ADP-L-glycero-D-manno-heptose-6-epimerase from Burkholderia multivorans (strain ATCC 17616 / 249).